Reading from the N-terminus, the 463-residue chain is Glycine--tRNA ligase (463 aa).

Substrate-binding residues include arginine 100 and glutamate 175. Residues 207–209 (RNE), 217–222 (FRTREF), 291–292 (EL), and 335–338 (GADR) each bind ATP. Residue 222-226 (FEQME) coordinates substrate. Substrate is bound at residue 331 to 335 (EPSLG).

Belongs to the class-II aminoacyl-tRNA synthetase family. Homodimer.

The protein resides in the cytoplasm. The catalysed reaction is tRNA(Gly) + glycine + ATP = glycyl-tRNA(Gly) + AMP + diphosphate. Functionally, catalyzes the attachment of glycine to tRNA(Gly). This Clostridium beijerinckii (strain ATCC 51743 / NCIMB 8052) (Clostridium acetobutylicum) protein is Glycine--tRNA ligase.